Reading from the N-terminus, the 334-residue chain is Cytoskeleton protein RodZ (334 aa).

Over M1–G111 the chain is Cytoplasmic. In terms of domain architecture, HTH cro/C1-type spans L19–L71. A DNA-binding region (H-T-H motif) is located at residues Q30–E49. The helical; Signal-anchor for type II membrane protein transmembrane segment at W112–W132 threads the bilayer. The Periplasmic segment spans residues W133–Q334. The interval N155–G241 is disordered. The segment covering G161–D175 has biased composition (polar residues). 2 stretches are compositionally biased toward low complexity: residues T176–A211 and T219–G241.

Belongs to the RodZ family.

Its subcellular location is the cell inner membrane. Functionally, cytoskeletal protein that is involved in cell-shape control through regulation of the length of the long axis. In Salmonella dublin (strain CT_02021853), this protein is Cytoskeleton protein RodZ.